We begin with the raw amino-acid sequence, 85 residues long: Conotoxin Lt28.2 (85 aa).

The signal sequence occupies residues 1–21; sequence MPKLEMMLLVLLILPLCYIDA. The propeptide occupies 22-40; the sequence is VGPPPPWNMEDEIIEHWQK.

The protein belongs to the conotoxin D superfamily. Contains 5 disulfide bonds. Expressed by the venom duct.

It localises to the secreted. Functionally, probable neurotoxin. The sequence is that of Conotoxin Lt28.2 from Conus litteratus (Lettered cone).